The chain runs to 48 residues: Delta-actitoxin-Bcg1c (48 aa).

3 disulfides stabilise this stretch: C4–C45, C6–C35, and C28–C46.

It is found in the secreted. Its subcellular location is the nematocyst. Binds specifically to voltage-gated sodium channels SCN1A/Nav1.1, thereby delaying their inactivation during signal transduction. This Bunodosoma cangicum (Sea anemone) protein is Delta-actitoxin-Bcg1c.